Consider the following 164-residue polypeptide: NADH-quinone oxidoreductase subunit I (164 aa).

4Fe-4S ferredoxin-type domains follow at residues 55–85 (LRRYPNGEERCIACKLCEAICPAQAITIDAE) and 95–124 (TRYDIDMTKCIYCGFCQEACPVDAIVEGPN). [4Fe-4S] cluster is bound by residues Cys-65, Cys-68, Cys-71, Cys-75, Cys-104, Cys-107, Cys-110, and Cys-114.

Belongs to the complex I 23 kDa subunit family. As to quaternary structure, NDH-1 is composed of 14 different subunits. Subunits NuoA, H, J, K, L, M, N constitute the membrane sector of the complex. The cofactor is [4Fe-4S] cluster.

It localises to the cell inner membrane. It catalyses the reaction a quinone + NADH + 5 H(+)(in) = a quinol + NAD(+) + 4 H(+)(out). In terms of biological role, NDH-1 shuttles electrons from NADH, via FMN and iron-sulfur (Fe-S) centers, to quinones in the respiratory chain. The immediate electron acceptor for the enzyme in this species is believed to be ubiquinone. Couples the redox reaction to proton translocation (for every two electrons transferred, four hydrogen ions are translocated across the cytoplasmic membrane), and thus conserves the redox energy in a proton gradient. This Ruegeria pomeroyi (strain ATCC 700808 / DSM 15171 / DSS-3) (Silicibacter pomeroyi) protein is NADH-quinone oxidoreductase subunit I.